We begin with the raw amino-acid sequence, 183 residues long: Translocon-associated protein subunit beta (183 aa).

An N-terminal signal peptide occupies residues 1–17 (MRLLASVLLALFAVSHA). Over 18 to 149 (EEGARLLASK…DRRFSPHFLD (132 aa)) the chain is Lumenal. N-linked (GlcNAc...) asparagine glycans are attached at residues asparagine 88 and asparagine 104. Residues 150–169 (WAAFGVMTLPSIGIPLLLWY) traverse the membrane as a helical segment. Topologically, residues 170 to 183 (SSKRKYDTPKSKKN) are cytoplasmic.

This sequence belongs to the TRAP-beta family. In terms of assembly, heterotetramer of TRAP-alpha, TRAP-beta, TRAP-delta and TRAP-gamma. Interacts with STING1.

It is found in the endoplasmic reticulum membrane. Functionally, TRAP proteins are part of a complex whose function is to bind calcium to the ER membrane and thereby regulate the retention of ER resident proteins. The chain is Translocon-associated protein subunit beta (SSR2) from Canis lupus familiaris (Dog).